A 522-amino-acid chain; its full sequence is Glutamate--cysteine ligase (522 aa).

It belongs to the glutamate--cysteine ligase type 1 family. Type 1 subfamily.

It catalyses the reaction L-cysteine + L-glutamate + ATP = gamma-L-glutamyl-L-cysteine + ADP + phosphate + H(+). The protein operates within sulfur metabolism; glutathione biosynthesis; glutathione from L-cysteine and L-glutamate: step 1/2. The polypeptide is Glutamate--cysteine ligase (Shewanella pealeana (strain ATCC 700345 / ANG-SQ1)).